Here is a 607-residue protein sequence, read N- to C-terminus: BTB/POZ domain-containing protein DOT3 (607 aa).

The 70-residue stretch at 52-121 (TDLSIQVNDI…CYNLPLDLNP (70 aa)) folds into the BTB domain. Positions 211-487 (RCLYNDIATL…VQINTQVLFS (277 aa)) constitute an NPH3 domain. Y428 bears the Phosphotyrosine mark. Disordered stretches follow at residues 498–520 (DKLP…SRDN) and 573–607 (KSFQ…MSMS). Basic and acidic residues-rich tracts occupy residues 499 to 520 (KLPE…SRDN) and 577 to 586 (TKREDEETRE). Residues 511–563 (REDKRMSRDNEIIKTLKEELENVKKKMSELQSDYNELQQEYERLSSKQKSSHN) adopt a coiled-coil conformation.

The protein belongs to the NPH3 family. As to expression, expressed in emerging leaf primordia.

It functions in the pathway protein modification; protein ubiquitination. Functionally, may act as a substrate-specific adapter of an E3 ubiquitin-protein ligase complex (CUL3-RBX1-BTB) which mediates the ubiquitination and subsequent proteasomal degradation of target proteins. Involved in leaf vasculature patterning. This is BTB/POZ domain-containing protein DOT3 from Arabidopsis thaliana (Mouse-ear cress).